Consider the following 313-residue polypeptide: Hydroxyacylglutathione hydrolase, mitochondrial (313 aa).

His-107, His-109, Asp-111, His-112, His-163, and Asp-187 together coordinate Zn(2+). Substrate is bound by residues 196 to 198 and 226 to 228; these read KFF and HEY. Zn(2+) is bound at residue His-226. Composition is skewed to basic and acidic residues over residues 285–294 and 301–313; these read VQEHAGERDP and IRKE…VPKD. The disordered stretch occupies residues 285–313; that stretch reads VQEHAGERDPISTMGAIRKEKDHFKVPKD. 302 to 305 contacts substrate; the sequence is RKEK.

Belongs to the metallo-beta-lactamase superfamily. Glyoxalase II family. Monomer. The cofactor is Zn(2+).

The protein localises to the mitochondrion matrix. Its subcellular location is the cytoplasm. It catalyses the reaction an S-(2-hydroxyacyl)glutathione + H2O = a 2-hydroxy carboxylate + glutathione + H(+). The catalysed reaction is (R)-S-lactoylglutathione + H2O = (R)-lactate + glutathione + H(+). Functionally, thiolesterase that catalyzes the hydrolysis of S-D-lactoyl-glutathione to form glutathione and D-lactic acid. The chain is Hydroxyacylglutathione hydrolase, mitochondrial (hagh) from Xenopus tropicalis (Western clawed frog).